We begin with the raw amino-acid sequence, 205 residues long: Ras-like protein 3 (205 aa).

16–23 (GGGGVGKS) contributes to the GTP binding site. The short motif at 38-46 (YDPTIEDSY) is the Effector region element. Residues 63–67 (DTAGQ) and 122–125 (NKCD) each bind GTP. Cys202 is subject to Cysteine methyl ester. The S-farnesyl cysteine moiety is linked to residue Cys202. A propeptide spans 203–205 (ILM) (removed in mature form).

It belongs to the small GTPase superfamily. Ras family.

The protein localises to the cell membrane. It catalyses the reaction GTP + H2O = GDP + phosphate + H(+). Alternates between an inactive form bound to GDP and an active form bound to GTP. Activated by a guanine nucleotide-exchange factor (GEF) and inactivated by a GTPase-activating protein (GAP). In Mucor circinelloides f. lusitanicus (Mucor racemosus var. lusitanicus), this protein is Ras-like protein 3 (RAS3).